The sequence spans 246 residues: Ribonuclease 3 (246 aa).

Positions phenylalanine 20–glycine 145 constitute an RNase III domain. Glutamate 62 lines the Mg(2+) pocket. The active site involves aspartate 66. Residues asparagine 131 and glutamate 134 each coordinate Mg(2+). Glutamate 134 is a catalytic residue. Residues serine 173–serine 241 form the DRBM domain.

The protein belongs to the ribonuclease III family. Homodimer. Mg(2+) serves as cofactor.

Its subcellular location is the cytoplasm. The catalysed reaction is Endonucleolytic cleavage to 5'-phosphomonoester.. Functionally, digests double-stranded RNA. Involved in the processing of primary rRNA transcript to yield the immediate precursors to the large and small rRNAs (23S and 16S). Processes some mRNAs, and tRNAs when they are encoded in the rRNA operon. Processes pre-crRNA and tracrRNA of type II CRISPR loci if present in the organism. The sequence is that of Ribonuclease 3 from Flavobacterium psychrophilum (strain ATCC 49511 / DSM 21280 / CIP 103535 / JIP02/86).